The chain runs to 254 residues: Insulin-like growth factor-binding protein 4 (254 aa).

The N-terminal stretch at 1–21 (MLPFGLVAALLLAAGPRPSLG) is a signal peptide. Positions 23 to 103 (EAIHCPPCSE…MHGQGVCTEL (81 aa)) constitute an IGFBP N-terminal domain. Intrachain disulfides connect cysteine 27–cysteine 53, cysteine 30–cysteine 55, cysteine 38–cysteine 56, cysteine 44–cysteine 59, cysteine 67–cysteine 80, and cysteine 74–cysteine 100. Asparagine 125 carries N-linked (GlcNAc...) asparagine glycosylation. The cysteines at positions 131 and 138 are disulfide-linked. The segment at 149–169 (RSKMKVVGTPREEPRPVPQGS) is disordered. The Thyroglobulin type-1 domain occupies 167–245 (QGSCQSELHR…GLEPKGELDC (79 aa)). Intrachain disulfides connect cysteine 170–cysteine 200, cysteine 211–cysteine 222, and cysteine 224–cysteine 245. Serine 251 carries the phosphoserine modification.

Binds IGF2 more than IGF1.

The protein resides in the secreted. Functionally, IGF-binding proteins prolong the half-life of the IGFs and have been shown to either inhibit or stimulate the growth promoting effects of the IGFs on cell culture. They alter the interaction of IGFs with their cell surface receptors. This is Insulin-like growth factor-binding protein 4 (Igfbp4) from Rattus norvegicus (Rat).